Here is a 1020-residue protein sequence, read N- to C-terminus: Phosphatidylinositol 3-kinase VPS34 (1020 aa).

Positions 49 to 210 (LSTKFEDPTV…NWLDKMVLPK (162 aa)) constitute a C2 PI3K-type domain. Residues 331-577 (DKELKPTPQL…DGPIKIYMDI (247 aa)) form the PIK helical domain. Positions 666 to 1004 (YPEESSVFKS…LINDSVNAFL (339 aa)) constitute a PI3K/PI4K catalytic domain. Residues 672–678 (VFKSSLA) are G-loop. Positions 873–881 (GVGDRHLDN) are catalytic loop. An activation loop region spans residues 892-913 (HADFGYILGRDPKPFPPLMKLP).

The protein belongs to the PI3/PI4-kinase family. In terms of assembly, component of the autophagy-specific VPS34 PI3-kinase complex I composed of at least VPS15, VPS30, VPS34, and of the VPS34 PI3-kinase complex II composed of VPS15, VPS30, VPS34 and VPS38. Interacts with VMNA7. Post-translationally, autophosphorylated.

Its subcellular location is the golgi apparatus. It localises to the trans-Golgi network membrane. It is found in the endosome membrane. The enzyme catalyses a 1,2-diacyl-sn-glycero-3-phospho-(1D-myo-inositol) + ATP = a 1,2-diacyl-sn-glycero-3-phospho-(1D-myo-inositol-3-phosphate) + ADP + H(+). Multifunctional phosphatidylinositol 3-kinase involved in acidification of vacuoles, pH-dependent cell growth, and autophagocytosis. Plays an important role in protein transport and virulence. Component of the autophagy-specific VPS34 PI3-kinase complex I essential to recruit the ATG8-phosphatidylinositol conjugate and the ATG12-ATG5 conjugate to the pre-autophagosomal structure. Also involved in endosome-to-Golgi retrograde transport as part of the VPS34 PI3-kinase complex II. This second complex is required for the endosome-to-Golgi retrieval of PEP1 and KEX2, and the recruitment of VPS5 and VPS7, two components of the retromer complex, to endosomal membranes (probably through the synthesis of a specific pool of phosphatidylinositol 3-phosphate recruiting the retromer to the endosomes). Finally, it might also be involved in ethanol tolerance and cell wall integrity. This is Phosphatidylinositol 3-kinase VPS34 from Candida albicans (strain SC5314 / ATCC MYA-2876) (Yeast).